The chain runs to 206 residues: Transmembrane 4 L6 family member 19 (206 aa).

The Cytoplasmic portion of the chain corresponds to 1–16 (MLSFSRVVNCSRTCSR). The chain crosses the membrane as a helical span at residues 17-37 (FLGLSLGTASLCAAGANIALL). Over 38-54 (FPNWDVTYLMRGLIGKH) the chain is Extracellular. Residues 55-75 (AMLGSGLWGGGLMVLLAATLI) traverse the membrane as a helical segment. The Cytoplasmic segment spans residues 76-89 (SMTGSFSKSAPCLQ). A helical membrane pass occupies residues 90–110 (VLIALLSSGLALLGAVICFVT). Residues 111 to 171 (SGVALKDGPF…PSKAVVWHVA (61 aa)) lie on the Extracellular side of the membrane. N-linked (GlcNAc...) asparagine glycosylation occurs at asparagine 129. Residues 172–192 (FFSILLCISLLQLLLVAIHLV) form a helical membrane-spanning segment. Positions 182–192 (LQLLLVAIHLV) are important for homodimerization. The Cytoplasmic segment spans residues 193–206 (NSILGLFCSFCEKH).

This sequence belongs to the L6 tetraspanin family. As to quaternary structure, may form homodimers and homooligomers. Interacts with integrins ITGAV and ITGB3. Interacts with components of members of the V0 complex of vacuolar(H+)-ATPase (V-ATPase), including ATP6V0B and ATP6V0D2; this interaction inhibits V1-V0 complex assembly. Predominantly expressed in osteoclasts (at protein level). Also expressed in white adipose tissue, as well as in bone marrow-derived macrophages.

It is found in the lysosome membrane. The protein resides in the cytoplasm. The protein localises to the cytoskeleton. It localises to the cell projection. Its subcellular location is the filopodium. Functionally, negatively regulates vacuolar (H+)-ATPase (V-ATPase) activity by interacting with members of V-ATPase V0 complex and hence inhibiting V1-V0 assembly. Required for multinucleation during osteoclast differentiation. This is Transmembrane 4 L6 family member 19 (Tm4sf19) from Mus musculus (Mouse).